The chain runs to 324 residues: Autolytic lysozyme (324 aa).

Active-site residues include aspartate 5 and glutamate 91. A run of 5 repeats spans residues leucine 212–phenylalanine 234, glutamine 235–alanine 254, glutamine 255–isoleucine 277, glutamine 278–tryptophan 300, and glutamine 301–asparagine 324. The tract at residues leucine 212–asparagine 324 is 5 X 23 AA tandem repeats.

Belongs to the glycosyl hydrolase 25 family. As to quaternary structure, monomer.

The protein resides in the secreted. Its subcellular location is the cytoplasm. It carries out the reaction Hydrolysis of (1-&gt;4)-beta-linkages between N-acetylmuramic acid and N-acetyl-D-glucosamine residues in a peptidoglycan and between N-acetyl-D-glucosamine residues in chitodextrins.. The sequence is that of Autolytic lysozyme (lyc) from Clostridium acetobutylicum (strain ATCC 824 / DSM 792 / JCM 1419 / IAM 19013 / LMG 5710 / NBRC 13948 / NRRL B-527 / VKM B-1787 / 2291 / W).